Here is a 308-residue protein sequence, read N- to C-terminus: MARAMDNAILETILQRVRPLIGQGKVADYIPALASVEGSKLGIAICTVDGQHYQAGDAHERFSIQSISKVLSLVVAMRHYPEEEIWQRVGKDPSGSPFNSLVQLEMEQGIPRNPFINAGALVVCDMLQGRLSAPRQRMLEVVRALCGVSDITYDATVARSEFEHSARNAAIAWLMKSFGNFHHDVPTVLQNYFHYCALKMSCMELARTFVFLANQGEAFHLDEPVVTPMQARQINALMATSGMYQNAGEFAWRVGLPAKSGVGGGIVAIVPHEMAIAVWSPELDPAGNSLAGIAALEQLTQTLGRSVY.

S66, N117, E161, N168, Y192, Y244, and V262 together coordinate substrate.

Belongs to the glutaminase family. As to quaternary structure, homotetramer.

The enzyme catalyses L-glutamine + H2O = L-glutamate + NH4(+). The protein is Glutaminase of Salmonella heidelberg (strain SL476).